A 393-amino-acid chain; its full sequence is NADH-quinone oxidoreductase subunit D (393 aa).

Belongs to the complex I 49 kDa subunit family. NDH-1 is composed of 14 different subunits. Subunits NuoB, C, D, E, F, and G constitute the peripheral sector of the complex.

It localises to the cell inner membrane. It catalyses the reaction a quinone + NADH + 5 H(+)(in) = a quinol + NAD(+) + 4 H(+)(out). In terms of biological role, NDH-1 shuttles electrons from NADH, via FMN and iron-sulfur (Fe-S) centers, to quinones in the respiratory chain. The immediate electron acceptor for the enzyme in this species is believed to be ubiquinone. Couples the redox reaction to proton translocation (for every two electrons transferred, four hydrogen ions are translocated across the cytoplasmic membrane), and thus conserves the redox energy in a proton gradient. This is NADH-quinone oxidoreductase subunit D from Ehrlichia canis (strain Jake).